The primary structure comprises 138 residues: Small ribosomal subunit protein uS11c (138 aa).

Residues 1 to 23 (MAKPILRIGSRKNTRSGSRKNVR) form a disordered region. Basic residues predominate over residues 9–23 (GSRKNTRSGSRKNVR).

The protein belongs to the universal ribosomal protein uS11 family. As to quaternary structure, part of the 30S ribosomal subunit.

It is found in the plastid. The protein resides in the chloroplast. The chain is Small ribosomal subunit protein uS11c from Barbarea verna (Land cress).